A 70-amino-acid polypeptide reads, in one-letter code: Melittin (70 aa).

The signal sequence occupies residues 1–21 (MKFLVNVALVFMVVYISFIYA). Positions 22-43 (APEPEPAPEAEAEADAEADPEA) are cleaved as a propeptide — removed by a dipeptidylpeptidase. Position 44 is an N-formylglycine; partial (Gly-44). Position 69 is a glutamine amide (Gln-69).

The protein belongs to the melittin family. In terms of assembly, monomer (in solution and for integration into membranes), homotetramer (in solution and potentially as a toroidal pore in membranes), and potenially homomultimer (as a toroidal pore in membranes). In terms of tissue distribution, expressed by the venom gland.

Its subcellular location is the secreted. The protein localises to the target cell membrane. Functionally, main toxin of bee venom with strong hemolytic activity and antimicrobial activity. It has enhancing effects on bee venom phospholipase A2 activity. This amphipathic toxin binds to negatively charged membrane surface and forms pore by inserting into lipid bilayers inducing the leakage of ions and molecules and the enhancement of permeability that ultimately leads to cell lysis. It acts as a voltage-gated pore with higher selectivity for anions over cations. The ion conductance has been shown to be voltage-dependent. Self-association of melittin in membranes is promoted by high ionic strength, but not by the presence of negatively charged lipids. In vivo, intradermal injection into healthy human volunteers produce sharp pain sensation and an inflammatory response. It produces pain by activating primary nociceptor cells directly and indirectly due to its ability to activate plasma membrane phospholipase A2 and its pore-forming activity. The protein is Melittin (MELT) of Apis cerana cerana (Oriental honeybee).